Consider the following 406-residue polypeptide: Argininosuccinate synthase (406 aa).

ATP-binding positions include 13-21 (AYSGGLDTS) and A40. Positions 91 and 96 each coordinate L-citrulline. G121 serves as a coordination point for ATP. Positions 123, 127, and 128 each coordinate L-aspartate. L-citrulline is bound at residue N127. L-citrulline-binding residues include R131, S182, S191, E267, and Y279.

This sequence belongs to the argininosuccinate synthase family. Type 1 subfamily. As to quaternary structure, homotetramer.

Its subcellular location is the cytoplasm. The catalysed reaction is L-citrulline + L-aspartate + ATP = 2-(N(omega)-L-arginino)succinate + AMP + diphosphate + H(+). It functions in the pathway amino-acid biosynthesis; L-arginine biosynthesis; L-arginine from L-ornithine and carbamoyl phosphate: step 2/3. The sequence is that of Argininosuccinate synthase from Brucella anthropi (strain ATCC 49188 / DSM 6882 / CCUG 24695 / JCM 21032 / LMG 3331 / NBRC 15819 / NCTC 12168 / Alc 37) (Ochrobactrum anthropi).